The chain runs to 91 residues: N.vectensis toxin 8 (91 aa).

An N-terminal signal peptide occupies residues Met-1–Thr-26. Disulfide bonds link Cys-45-Cys-76, Cys-47-Cys-67, and Cys-60-Cys-77.

Expressed in ectodermal gland cells.

Its function is as follows. Has toxic effects on zebrafish larvae. It causes contractile paralysis and twitching of the tail within 20 minutes, followed by death within 30 minutes. Does not show any toxicity when injected into arthropods (cherry shrimps or grass shrimps). This is N.vectensis toxin 8 from Nematostella vectensis (Starlet sea anemone).